We begin with the raw amino-acid sequence, 303 residues long: Ribosomal RNA small subunit methyltransferase H (303 aa).

S-adenosyl-L-methionine-binding positions include Gly33–His35, Asp52, Phe78, Asp99, and Gln106.

The protein belongs to the methyltransferase superfamily. RsmH family.

Its subcellular location is the cytoplasm. The enzyme catalyses cytidine(1402) in 16S rRNA + S-adenosyl-L-methionine = N(4)-methylcytidine(1402) in 16S rRNA + S-adenosyl-L-homocysteine + H(+). Specifically methylates the N4 position of cytidine in position 1402 (C1402) of 16S rRNA. The protein is Ribosomal RNA small subunit methyltransferase H of Phytoplasma australiense.